We begin with the raw amino-acid sequence, 392 residues long: HCLS1-binding protein 3 (392 aa).

Met-1 bears the N-acetylmethionine mark. Ser-3, Ser-139, and Ser-194 each carry phosphoserine. Positions 19 to 142 (GLDLTVPQHQ…EFLGTRSPGA (124 aa)) constitute a PX domain. Disordered regions lie at residues 138–162 (RSPG…QTGN), 174–265 (DQVA…PLKL), and 319–364 (GAEP…KPQE). Over residues 190-201 (DAEESLEEEEAL) the composition is skewed to acidic residues. Residues 208–220 (RSKKPKKHPKVAV) show a composition bias toward basic residues. Position 249 is a phosphoserine (Ser-249). A compositionally biased stretch (pro residues) spans 325 to 335 (KPQLKPKPPVA). Residue Lys-337 is modified to N6-acetyllysine.

Binds HCLS1. Interacts with the SH3 domain of HCLS1 in vitro.

May be a modulator of IL-2 signaling. The polypeptide is HCLS1-binding protein 3 (HS1BP3) (Homo sapiens (Human)).